Here is a 136-residue protein sequence, read N- to C-terminus: Ig heavy chain V region XIG8 (136 aa).

The signal sequence occupies residues 1-18 (GFGIFVIFMFFSPSCILS). One can recognise an Ig-like domain in the interval 19-128 (QTLQESGPGT…TAGYFEHWGQ (110 aa)).

The sequence is that of Ig heavy chain V region XIG8 from Xenopus laevis (African clawed frog).